The primary structure comprises 375 residues: Ribosomal RNA large subunit methyltransferase G (375 aa).

This sequence belongs to the methyltransferase superfamily. RlmG family.

It localises to the cytoplasm. It carries out the reaction guanosine(1835) in 23S rRNA + S-adenosyl-L-methionine = N(2)-methylguanosine(1835) in 23S rRNA + S-adenosyl-L-homocysteine + H(+). Specifically methylates the guanine in position 1835 (m2G1835) of 23S rRNA. In Stutzerimonas stutzeri (strain A1501) (Pseudomonas stutzeri), this protein is Ribosomal RNA large subunit methyltransferase G.